We begin with the raw amino-acid sequence, 593 residues long: Probable translation initiation factor IF-2 (593 aa).

A tr-type G domain is found at 7 to 221 (IRTPIVCVMG…VLIGLAQRYM (215 aa)). Residues 16–23 (GHVDHGKT) are G1. GTP is bound at residue 16 to 23 (GHVDHGKT). The interval 41–45 (EITQH) is G2. The tract at residues 77–80 (DTPG) is G3. Residues 77–81 (DTPGH) and 131–134 (NKVD) contribute to the GTP site. Positions 131-134 (NKVD) are G4. The interval 199–201 (SAL) is G5.

This sequence belongs to the TRAFAC class translation factor GTPase superfamily. Classic translation factor GTPase family. IF-2 subfamily.

In terms of biological role, function in general translation initiation by promoting the binding of the formylmethionine-tRNA to ribosomes. Seems to function along with eIF-2. This Methanoculleus marisnigri (strain ATCC 35101 / DSM 1498 / JR1) protein is Probable translation initiation factor IF-2.